A 184-amino-acid polypeptide reads, in one-letter code: ATP synthase subunit b, chloroplastic (184 aa).

The chain crosses the membrane as a helical span at residues Leu-27–Leu-49.

The protein belongs to the ATPase B chain family. As to quaternary structure, F-type ATPases have 2 components, F(1) - the catalytic core - and F(0) - the membrane proton channel. F(1) has five subunits: alpha(3), beta(3), gamma(1), delta(1), epsilon(1). F(0) has four main subunits: a(1), b(1), b'(1) and c(10-14). The alpha and beta chains form an alternating ring which encloses part of the gamma chain. F(1) is attached to F(0) by a central stalk formed by the gamma and epsilon chains, while a peripheral stalk is formed by the delta, b and b' chains.

It is found in the plastid. The protein localises to the chloroplast thylakoid membrane. Its function is as follows. F(1)F(0) ATP synthase produces ATP from ADP in the presence of a proton or sodium gradient. F-type ATPases consist of two structural domains, F(1) containing the extramembraneous catalytic core and F(0) containing the membrane proton channel, linked together by a central stalk and a peripheral stalk. During catalysis, ATP synthesis in the catalytic domain of F(1) is coupled via a rotary mechanism of the central stalk subunits to proton translocation. Functionally, component of the F(0) channel, it forms part of the peripheral stalk, linking F(1) to F(0). The sequence is that of ATP synthase subunit b, chloroplastic from Nicotiana tabacum (Common tobacco).